The chain runs to 134 residues: Phosphoribosyl-AMP cyclohydrolase (134 aa).

Asp-78 is a binding site for Mg(2+). Cys-79 provides a ligand contact to Zn(2+). Mg(2+)-binding residues include Asp-80 and Asp-82. Zn(2+) is bound by residues Cys-96 and Cys-103.

Belongs to the PRA-CH family. In terms of assembly, homodimer. It depends on Mg(2+) as a cofactor. The cofactor is Zn(2+).

It is found in the cytoplasm. It carries out the reaction 1-(5-phospho-beta-D-ribosyl)-5'-AMP + H2O = 1-(5-phospho-beta-D-ribosyl)-5-[(5-phospho-beta-D-ribosylamino)methylideneamino]imidazole-4-carboxamide. The protein operates within amino-acid biosynthesis; L-histidine biosynthesis; L-histidine from 5-phospho-alpha-D-ribose 1-diphosphate: step 3/9. Its function is as follows. Catalyzes the hydrolysis of the adenine ring of phosphoribosyl-AMP. This chain is Phosphoribosyl-AMP cyclohydrolase, found in Cupriavidus necator (strain ATCC 17699 / DSM 428 / KCTC 22496 / NCIMB 10442 / H16 / Stanier 337) (Ralstonia eutropha).